Reading from the N-terminus, the 296-residue chain is Light-independent protochlorophyllide reductase iron-sulfur ATP-binding protein (296 aa).

Residues 39–44 (GIGKST) and Lys68 each bind ATP. A Mg(2+)-binding site is contributed by Ser43. Positions 124 and 158 each coordinate [4Fe-4S] cluster. 209-210 (NR) provides a ligand contact to ATP.

It belongs to the NifH/BchL/ChlL family. Homodimer. Protochlorophyllide reductase is composed of three subunits; ChlL, ChlN and ChlB. Requires [4Fe-4S] cluster as cofactor.

The catalysed reaction is chlorophyllide a + oxidized 2[4Fe-4S]-[ferredoxin] + 2 ADP + 2 phosphate = protochlorophyllide a + reduced 2[4Fe-4S]-[ferredoxin] + 2 ATP + 2 H2O. Its pathway is porphyrin-containing compound metabolism; chlorophyll biosynthesis (light-independent). Functionally, component of the dark-operative protochlorophyllide reductase (DPOR) that uses Mg-ATP and reduced ferredoxin to reduce ring D of protochlorophyllide (Pchlide) to form chlorophyllide a (Chlide). This reaction is light-independent. The L component serves as a unique electron donor to the NB-component of the complex, and binds Mg-ATP. The chain is Light-independent protochlorophyllide reductase iron-sulfur ATP-binding protein from Synechococcus sp. (strain CC9605).